We begin with the raw amino-acid sequence, 298 residues long: Peroxisomal 2,4-dienoyl-CoA reductase [(3E)-enoyl-CoA-producing] (298 aa).

19–24 (GGGSGI) provides a ligand contact to NADP(+). Arginine 44 lines the substrate pocket. Aspartate 69 provides a ligand contact to NADP(+). Residues arginine 71, phenylalanine 101, and 109-111 (SPN) contribute to the substrate site. NADP(+) is bound by residues lysine 173 and 200–206 (PGPIGGT). Residues 279 to 298 (SRAVEKRSRAKPVGLPTSKL) are disordered. The Microbody targeting signal motif lies at 296–298 (SKL).

It belongs to the short-chain dehydrogenases/reductases (SDR) family. 2,4-dienoyl-CoA reductase subfamily.

It localises to the peroxisome. It catalyses the reaction a (2E,4Z)-dienoyl-CoA + NADPH + H(+) = a 4,5-saturated-(3E)-enoyl-CoA + NADP(+). It carries out the reaction a (2E,4E)-dienoyl-CoA + NADPH + H(+) = a 4,5-saturated-(3E)-enoyl-CoA + NADP(+). Its function is as follows. Auxiliary enzyme of beta-oxidation. Participates in the degradation of unsaturated fatty enoyl-CoA esters having double bonds in both even- and odd-numbered positions in peroxisome. Catalyzes the NADP-dependent reduction of 2,4-dienoyl-CoA to yield trans-3-enoyl-CoA. In Arabidopsis thaliana (Mouse-ear cress), this protein is Peroxisomal 2,4-dienoyl-CoA reductase [(3E)-enoyl-CoA-producing].